A 304-amino-acid polypeptide reads, in one-letter code: GTP cyclohydrolase FolE2 (304 aa).

The protein belongs to the GTP cyclohydrolase IV family.

The catalysed reaction is GTP + H2O = 7,8-dihydroneopterin 3'-triphosphate + formate + H(+). It participates in cofactor biosynthesis; 7,8-dihydroneopterin triphosphate biosynthesis; 7,8-dihydroneopterin triphosphate from GTP: step 1/1. Functionally, converts GTP to 7,8-dihydroneopterin triphosphate. This is GTP cyclohydrolase FolE2 from Hahella chejuensis (strain KCTC 2396).